A 518-amino-acid chain; its full sequence is Cytochrome P450 monooxygenase pyr3 (518 aa).

Residues 26 to 46 (GVAIVLFLAPLALHLVSSYLF) traverse the membrane as a helical segment. Cys-458 provides a ligand contact to heme.

The protein belongs to the cytochrome P450 family. It depends on heme as a cofactor.

The protein localises to the membrane. It participates in secondary metabolite biosynthesis; terpenoid biosynthesis. Cytochrome P450 monooxygenase; part of the gene cluster that mediates the biosynthesis of pyripyropene A, a specific human acyl-coenzyme A:cholesterol acyltransferase 2 inhibitor. The first step of the pathway is the synthesis of nicotinyl-CoA from nicotinic acid by the nicotinic acid-CoA ligase pyr1. Nicotinyl-CoA is then a substrate of polyketide synthase pyr2 to produce 4-hydroxy-6-(3-pyridinyl)-2H-pyran-2-one (HPPO) which is further prenylated by the polyprenyl transferase pyr6 to yield farnesyl-HPPO. The next steps consist of an epoxidation of farnesyl-HPPO to epoxyfarnesyl-HPPO by FAD-dependent monooxygenase pyr5 and a cyclization of the terpenoid portion by the terpene cyclase pyr4 to yield deacetyl-pyripyropene E. The 2 cytochrome P450 monooxygenases pyr3 and pyr9, and the 2 acetyltransferases pyr7 and pyr8 are involved in the conversion of deacetyl-pyripyropene E into pyripyropene A through several cycles of oxidation and acetylation steps. Pyr7 acetylates deacetyl-pyripyropene E to pyripyropene E which is oxidized to 11-deacetyl-pyripyropene O by pyr3, which is in turn acetylated into pyripyropene O by pyr8. Pyripyropene O is then oxidized to deacetyl-pyripyropene A by pyr9. Deacetyl-pyripyropene A is finally acetylated to pyripyropene A by pyr8. This Aspergillus fumigatus (strain ATCC MYA-4609 / CBS 101355 / FGSC A1100 / Af293) (Neosartorya fumigata) protein is Cytochrome P450 monooxygenase pyr3.